Reading from the N-terminus, the 775-residue chain is Serine/threonine-protein kinase-like protein CCR1 (775 aa).

The signal sequence occupies residues 1–23 (METRCSLLFLSLILLYLPKPGSG). At 24 to 439 (FGSSGPIAAS…DKHWHQLQRL (416 aa)) the chain is on the extracellular side. N-linked (GlcNAc...) asparagine glycans are attached at residues Asn-57, Asn-102, Asn-167, Asn-213, Asn-220, Asn-241, Asn-261, Asn-292, Asn-328, and Asn-360. Residues 351–406 (PCNEKEFAFNASILNEPDLTSLCVRKELMVCSPCGSDCSHGFFLSSSCTANSDRIC) form a TNFR-Cys repeat. Intrachain disulfides connect Cys-352–Cys-381, Cys-384–Cys-398, and Cys-388–Cys-406. N-linked (GlcNAc...) asparagine glycosylation occurs at Asn-414. The helical transmembrane segment at 440 to 460 (VLIIGSCASALLIIIIGCCVV) threads the bilayer. Residues 461 to 775 (PRIVTSPNKE…EHVARDALIF (315 aa)) are Cytoplasmic-facing. One can recognise a Protein kinase domain in the interval 520 to 770 (FKEFNELGRG…LANWLEHVAR (251 aa)). Residues 526–534 (LGRGSYGFV) and Lys-548 each bind ATP. The active-site Proton acceptor is Asp-645.

It belongs to the protein kinase superfamily. Ser/Thr protein kinase family. As to quaternary structure, homodimer. In terms of tissue distribution, expressed in roots, leaves, shoot apical meristems (SAM), and floral buds.

The protein localises to the membrane. It carries out the reaction L-seryl-[protein] + ATP = O-phospho-L-seryl-[protein] + ADP + H(+). The enzyme catalyses L-threonyl-[protein] + ATP = O-phospho-L-threonyl-[protein] + ADP + H(+). Functionally, serine/threonine-protein kinase with low activity. This chain is Serine/threonine-protein kinase-like protein CCR1 (CCR1), found in Arabidopsis thaliana (Mouse-ear cress).